Consider the following 170-residue polypeptide: Probable inactive uracil-DNA glycosylase, mitochondrial (170 aa).

A mitochondrion-targeting transit peptide spans 1–53 (MALSTPKTLMDFFQPAKRLKASPSSSSSFPAVSVAGRSRDLGSVANSPPRVTV).

It belongs to the uracil-DNA glycosylase (UDG) superfamily. UNG family.

It localises to the mitochondrion. Probable inactive paralog of AtUNG (AC Q9LIH6) generated by a gene duplication event and subsequently disrupted by at least two transposon insertions. This Arabidopsis thaliana (Mouse-ear cress) protein is Probable inactive uracil-DNA glycosylase, mitochondrial.